Here is a 71-residue protein sequence, read N- to C-terminus: uncharacterized protein (71 aa).

This is an uncharacterized protein from Bacillus subtilis (strain 168).